A 335-amino-acid chain; its full sequence is Ketol-acid reductoisomerase (NADP(+)) (335 aa).

The 181-residue stretch at 5 to 185 folds into the KARI N-terminal Rossmann domain; it reads SKIYTDKDSN…GATRAGVIPT (181 aa). NADP(+) is bound by residues 28–31, Ser-56, and 86–89; these read YGSQ and DMVQ. His-111 is an active-site residue. Gly-137 is a binding site for NADP(+). The 146-residue stretch at 186–331 folds into the KARI C-terminal knotted domain; it reads TFKEETETDL…NQLKDLIQKG (146 aa). Mg(2+) is bound by residues Asp-194, Glu-198, Glu-230, and Glu-234. Ser-255 contributes to the substrate binding site.

Belongs to the ketol-acid reductoisomerase family. Requires Mg(2+) as cofactor.

It catalyses the reaction (2R)-2,3-dihydroxy-3-methylbutanoate + NADP(+) = (2S)-2-acetolactate + NADPH + H(+). The enzyme catalyses (2R,3R)-2,3-dihydroxy-3-methylpentanoate + NADP(+) = (S)-2-ethyl-2-hydroxy-3-oxobutanoate + NADPH + H(+). Its pathway is amino-acid biosynthesis; L-isoleucine biosynthesis; L-isoleucine from 2-oxobutanoate: step 2/4. The protein operates within amino-acid biosynthesis; L-valine biosynthesis; L-valine from pyruvate: step 2/4. Functionally, involved in the biosynthesis of branched-chain amino acids (BCAA). Catalyzes an alkyl-migration followed by a ketol-acid reduction of (S)-2-acetolactate (S2AL) to yield (R)-2,3-dihydroxy-isovalerate. In the isomerase reaction, S2AL is rearranged via a Mg-dependent methyl migration to produce 3-hydroxy-3-methyl-2-ketobutyrate (HMKB). In the reductase reaction, this 2-ketoacid undergoes a metal-dependent reduction by NADPH to yield (R)-2,3-dihydroxy-isovalerate. The sequence is that of Ketol-acid reductoisomerase (NADP(+)) from Saccharolobus islandicus (strain Y.G.57.14 / Yellowstone #1) (Sulfolobus islandicus).